The following is a 601-amino-acid chain: Amino-acid acetyltransferase, mitochondrial (601 aa).

The 158-residue stretch at 401–558 folds into the N-acetyltransferase domain; the sequence is FTMDNLIASK…KKKQNNKKKK (158 aa).

Belongs to the acetyltransferase family.

It localises to the mitochondrion. The enzyme catalyses L-glutamate + acetyl-CoA = N-acetyl-L-glutamate + CoA + H(+). It functions in the pathway amino-acid biosynthesis; L-arginine biosynthesis; N(2)-acetyl-L-ornithine from L-glutamate: step 1/4. Its function is as follows. N-acetylglutamate synthase involved in arginine biosynthesis. In Lodderomyces elongisporus (strain ATCC 11503 / CBS 2605 / JCM 1781 / NBRC 1676 / NRRL YB-4239) (Yeast), this protein is Amino-acid acetyltransferase, mitochondrial (ARG2).